Here is a 545-residue protein sequence, read N- to C-terminus: E3 ubiquitin-protein ligase ipaH9.8 (545 aa).

The tract at residues Met-1–Met-242 is interaction with target proteins. 8 LRR repeats span residues Asn-57–Ala-77, Gln-78–Leu-99, Lys-100–Pro-117, Ala-118–Leu-139, Leu-140–Gln-157, Ala-158–Asn-179, Val-182–Leu-203, and Asn-205–Thr-228. The tract at residues Ser-243–Leu-250 is linker. The tract at residues His-251–Ser-545 is E3 ubiquitin-protein ligase catalytic domain. Positions Pro-253–Ser-545 constitute an NEL domain. Cys-337 functions as the Glycyl thioester intermediate in the catalytic mechanism.

This sequence belongs to the LRR-containing bacterial E3 ligase family. Also interacts with human and mouse U2AF1 (U2AF35). Ubiquitinated in the presence of host E1 ubiquitin-activating enzyme, E2 ubiquitin-conjugating enzyme and ubiquitin.

Its subcellular location is the secreted. The protein resides in the host cytoplasm. It is found in the host nucleus. The enzyme catalyses S-ubiquitinyl-[E2 ubiquitin-conjugating enzyme]-L-cysteine + [acceptor protein]-L-lysine = [E2 ubiquitin-conjugating enzyme]-L-cysteine + N(6)-ubiquitinyl-[acceptor protein]-L-lysine.. With respect to regulation, exists in an autoinhibited state in the absence of substrate protein, due to interactions of the leucine-rich repeats with NEL domain. Is activated upon binding to a substrate protein. Its function is as follows. Effector E3 ubiquitin ligase that interferes with host's ubiquitination pathway and modulates the acute inflammatory responses, thus facilitating bacterial colonization within the host cell. Interacts with IKBKG (NEMO) and TNIP1 (ABIN-1), a ubiquitin-binding adapter protein, which results in TNIP1-dependent 'Lys-27'-linked polyubiquitination of IKBKG. Consequently, polyubiquitinated IKBKG undergoes proteasome-dependent degradation, which perturbs NF-kappa-B activation during bacterial infection. Mediates polyubiquitination of host U2AF1, leading to its proteasomal degradation. Catalyzes 'Lys-48'-linked polyubiquitination and subsequent degradation of a subset of host guanylate-binding proteins (GBP1, GBP2, GBP4 and GBP6), thereby suppressing host cell defense. In contrast, host GBP3 and GBP7 are not ubiquitinated by IpaH9.8. Uses UBE2D2 (UBCH5B) as an E2 ubiquitin-conjugating enzyme. The chain is E3 ubiquitin-protein ligase ipaH9.8 (ipaH9.8) from Shigella boydii serotype 18 (strain CDC 3083-94 / BS512).